The primary structure comprises 352 residues: C-X-C chemokine receptor type 4 (352 aa).

Positions 1 to 21 (MEGISIYTSDNYTEEMGSGDY) are important for chemokine binding and signaling. Residues 1–38 (MEGISIYTSDNYTEEMGSGDYDSIKEPCFREKNAHFNR) lie on the Extracellular side of the membrane. At Tyr7 the chain carries Sulfotyrosine. Asn11 carries an N-linked (GlcNAc...) asparagine glycan. Sulfotyrosine is present on Tyr12. A glycan (O-linked (Xyl...) (chondroitin sulfate) serine) is linked at Ser18. The residue at position 21 (Tyr21) is a Sulfotyrosine. 2 cysteine pairs are disulfide-bonded: Cys28/Cys274 and Cys109/Cys186. A helical transmembrane segment spans residues 39–63 (IFLPTIYSIIFLTGIVGNGLVILVM). Over 64-77 (GYQKKLRSMTDKYR) the chain is Cytoplasmic. The chain crosses the membrane as a helical span at residues 78-99 (LHLSVADLLFVITLPFWAVDAV). The segment at 94 to 97 (WAVD) is chemokine binding. The Extracellular segment spans residues 100-110 (ANWYFGNFLCK). A helical transmembrane segment spans residues 111-130 (AVHVIYTVNLYSSVLILAFI). The chemokine binding stretch occupies residues 113–117 (HVIYT). Residues 131 to 154 (SLDRYLAIVHATNSQKPRKLLAEK) lie on the Cytoplasmic side of the membrane. Positions 133-135 (DRY) match the Important for signaling motif. The segment at 135–147 (YLAIVHATNSQKP) is involved in dimerization; when bound to chemokine. The chain crosses the membrane as a helical span at residues 155–174 (VVYVGVWIPALLLTIPGFIF). Residues 175–195 (ASVSEADDRFICDRFYPNDLW) are Extracellular-facing. Positions 186–190 (CDRFY) are chemokine binding, important for signaling. Residues 191 to 210 (PNDLWVVVFQFQHIMVGLIL) form an involved in dimerization region. The chain crosses the membrane as a helical span at residues 196-216 (VVVFQFQHIMVGLILPGIVIL). Residues 217-241 (SCYCIIISKLSHSKGHQKRKALKTT) lie on the Cytoplasmic side of the membrane. A helical membrane pass occupies residues 242–261 (VILILAFFACWLPYYIGISI). Over 262–282 (DSFILLEIIKQGCEFENTVHK) the chain is Extracellular. An involved in dimerization region spans residues 266 to 268 (LLE). The chain crosses the membrane as a helical span at residues 283–302 (WISITEALAFFHCCLNPILY). At 303-352 (AFLGAKFKTSAQHALTSVSRGSSLKILSKGKRGGHSSVSTESESSSFHSS) the chain is on the cytoplasmic side. 2 positions are modified to phosphoserine: Ser319 and Ser321. A phosphoserine; by PKC and GRK6 mark is found at Ser324 and Ser325. The interval 329–352 (LSKGKRGGHSSVSTESESSSFHSS) is disordered. Ser330 bears the Phosphoserine; by GRK6 mark. Residue Lys331 forms a Glycyl lysine isopeptide (Lys-Gly) (interchain with G-Cter in ubiquitin) linkage. The segment covering 337-352 (HSSVSTESESSSFHSS) has biased composition (low complexity). The residue at position 339 (Ser339) is a Phosphoserine; by GRK6. 2 positions are modified to phosphoserine: Ser348 and Ser351.

This sequence belongs to the G-protein coupled receptor 1 family. In terms of assembly, monomer. Can form homodimers. Interacts with CD164. Interacts with ARRB2; the interaction is dependent on the C-terminal phosphorylation of CXCR4 and allows activation of MAPK1 and MAPK3. Interacts with ARR3; the interaction is dependent on the C-terminal phosphorylation of CXCR4 and modulates calcium mobilization. Interacts with RNF113A; the interaction, enhanced by CXCL12, promotes CXCR4 ubiquitination and subsequent degradation. Interacts (via the cytoplasmic C-terminal) with ITCH (via the WW domains I and II); the interaction, enhanced by CXCL12, promotes CXCR4 ubiquitination and leads to its degradation. Interacts with extracellular ubiquitin. Interacts with DBN1; this interaction is enhanced by antigenic stimulation. Following LPS binding, may form a complex with GDF5, HSP90AA1 and HSPA8. Post-translationally, phosphorylated on agonist stimulation. Rapidly phosphorylated on serine and threonine residues in the C-terminal. Phosphorylation at Ser-324 and Ser-325 leads to recruitment of ITCH, ubiquitination and protein degradation. Ubiquitinated after ligand binding, leading to its degradation. Ubiquitinated by ITCH at the cell membrane on agonist stimulation. The ubiquitin-dependent mechanism, endosomal sorting complex required for transport (ESCRT), then targets CXCR4 for lysosomal degradation. This process is dependent also on prior Ser-/Thr-phosphorylation in the C-terminal of CXCR4. Also binding of ARRB1 to STAM negatively regulates CXCR4 sorting to lysosomes though modulating ubiquitination of SFR5S. In terms of processing, sulfation is required for efficient binding of CXCL12/SDF-1alpha and promotes its dimerization. Post-translationally, O- and N-glycosylated. N-glycosylation can mask coreceptor function. The O-glycosylation chondroitin sulfate attachment does not affect interaction with CXCL12/SDF-1alpha nor its coreceptor activity.

The protein resides in the cell membrane. It localises to the cell junction. It is found in the early endosome. Its subcellular location is the late endosome. The protein localises to the lysosome. Functionally, receptor for the C-X-C chemokine CXCL12/SDF-1 that transduces a signal by increasing intracellular calcium ion levels and enhancing MAPK1/MAPK3 activation. Involved in the AKT signaling cascade. Plays a role in regulation of cell migration, e.g. during wound healing. Acts as a receptor for extracellular ubiquitin; leading to enhanced intracellular calcium ions and reduced cellular cAMP levels. Binds bacterial lipopolysaccharide (LPS) et mediates LPS-induced inflammatory response, including TNF secretion by monocytes. Involved in hematopoiesis and in cardiac ventricular septum formation. Also plays an essential role in vascularization of the gastrointestinal tract, probably by regulating vascular branching and/or remodeling processes in endothelial cells. Involved in cerebellar development. In the CNS, could mediate hippocampal-neuron survival. In Cercocebus atys (Sooty mangabey), this protein is C-X-C chemokine receptor type 4 (CXCR4).